The sequence spans 37 residues: Hemextin A (37 aa).

In terms of assembly, heterotetramer composed of two A and two B chains; non-covalently linked. Does not exist as a complex in the crude venom. In terms of processing, may contain several disulfide bonds. In terms of tissue distribution, expressed by the venom gland.

Its subcellular location is the secreted. Functionally, hemextin A (monomer): exhibits mild anticoagulant activity. It specifically inhibits the activation of FX (F10) by the TF-FVIIa complex (extrinsic tenase complex (ETC)) by non-competitively inhibiting the enzymatic activity of FVIIa. Hemextin AB complex: specifically inhibits the activation of FX (F10) by the TF-FVIIa complex (extrinsic tenase complex (ETC)) (IC(50)= 100 nM, Ki=25 nM) by non-competitively inhibiting the enzymatic activity of FVIIa. This is Hemextin A from Hemachatus haemachatus (Rinkhals).